A 53-amino-acid chain; its full sequence is Sec-independent protein translocase protein TatA (53 aa).

A helical membrane pass occupies residues 1 to 21; sequence MGMSFSHLLIVLLIIFVLFGA.

The protein belongs to the TatA/E family. The Tat system comprises two distinct complexes: a TatABC complex, containing multiple copies of TatA, TatB and TatC subunits, and a separate TatA complex, containing only TatA subunits. Substrates initially bind to the TatABC complex, which probably triggers association of the separate TatA complex to form the active translocon.

Its subcellular location is the cell inner membrane. Functionally, part of the twin-arginine translocation (Tat) system that transports large folded proteins containing a characteristic twin-arginine motif in their signal peptide across membranes. TatA could form the protein-conducting channel of the Tat system. The sequence is that of Sec-independent protein translocase protein TatA from Rickettsia africae (strain ESF-5).